The chain runs to 116 residues: Large ribosomal subunit protein uL24 (116 aa).

Belongs to the universal ribosomal protein uL24 family. In terms of assembly, part of the 50S ribosomal subunit.

Its function is as follows. One of two assembly initiator proteins, it binds directly to the 5'-end of the 23S rRNA, where it nucleates assembly of the 50S subunit. Located at the polypeptide exit tunnel on the outside of the subunit. The sequence is that of Large ribosomal subunit protein uL24 from Methanothrix thermoacetophila (strain DSM 6194 / JCM 14653 / NBRC 101360 / PT) (Methanosaeta thermophila).